A 203-amino-acid polypeptide reads, in one-letter code: MAASSSYMACAKFSMLGWLGGRRELKMRRVISVSPQEQAEVQESQEVNAQEEEKVKQPVQPRPVEPQVNVKSKNMGREYGGQWLSSVTRHVRIYAAYIDPETCEFDQTQTDKLTLILDPTDEFVWTDETCYKVYSYFQELVDHYEGAPLTEYTLRLIGSDIEHYIRKLLYDGEIKYNMNARVLNFSMGKPRILFNNDGQLQDV.

Residues 1–21 (MAASSSYMACAKFSMLGWLGG) constitute a chloroplast transit peptide. The segment covering 34 to 48 (SPQEQAEVQESQEVN) has biased composition (low complexity). The disordered stretch occupies residues 34–61 (SPQEQAEVQESQEVNAQEEEKVKQPVQP).

Belongs to the NDH complex subunit M family. Part of the chloroplast NDH complex, composed of a mixture of chloroplast and nucleus encoded subunits. Component of the NDH subcomplex A, at least composed of ndhH, ndhI, ndhJ, ndhK, ndhL, ndhM, ndhN and ndhO.

It is found in the plastid. Its subcellular location is the chloroplast thylakoid membrane. The enzyme catalyses a plastoquinone + NADH + (n+1) H(+)(in) = a plastoquinol + NAD(+) + n H(+)(out). The catalysed reaction is a plastoquinone + NADPH + (n+1) H(+)(in) = a plastoquinol + NADP(+) + n H(+)(out). In terms of biological role, NDH shuttles electrons from NAD(P)H:plastoquinone, via FMN and iron-sulfur (Fe-S) centers, to quinones in the photosynthetic chain and possibly in a chloroplast respiratory chain. The immediate electron acceptor for the enzyme in this species is believed to be plastoquinone. Couples the redox reaction to proton translocation, and thus conserves the redox energy in a proton gradient. This Populus jackii (Balm of Gilead) protein is NAD(P)H-quinone oxidoreductase subunit M, chloroplastic.